We begin with the raw amino-acid sequence, 101 residues long: Large ribosomal subunit protein uL24 (101 aa).

This sequence belongs to the universal ribosomal protein uL24 family. Part of the 50S ribosomal subunit.

One of two assembly initiator proteins, it binds directly to the 5'-end of the 23S rRNA, where it nucleates assembly of the 50S subunit. In terms of biological role, one of the proteins that surrounds the polypeptide exit tunnel on the outside of the subunit. In Lactococcus lactis subsp. lactis (strain IL1403) (Streptococcus lactis), this protein is Large ribosomal subunit protein uL24.